The following is a 35-amino-acid chain: N-acylglucosamine 2-epimerase (35 aa).

Residues 1-21 (LNLVDQLGEADEELAGTYAEL) are leucine-zipper.

Belongs to the N-acylglucosamine 2-epimerase family. As to quaternary structure, homodimer. Forms a heterodimer with renin and inhibits its activity.

It carries out the reaction an N-acyl-D-glucosamine = an N-acyl-D-mannosamine. The protein operates within amino-sugar metabolism; N-acetylneuraminate degradation. Functionally, catalyzes the interconversion of N-acetylglucosamine to N-acetylmannosamine. Involved in the N-glycolylneuraminic acid (Neu5Gc) degradation pathway. In Canis lupus familiaris (Dog), this protein is N-acylglucosamine 2-epimerase.